A 375-amino-acid chain; its full sequence is Formate dehydrogenase (375 aa).

2 residues coordinate substrate: isoleucine 94 and asparagine 120. NAD(+) is bound by residues 175-176 (RI), aspartate 196, 231-235 (PLHEK), threonine 257, aspartate 283, 312-315 (HMSG), and serine 358.

It belongs to the D-isomer specific 2-hydroxyacid dehydrogenase family. FDH subfamily. As to quaternary structure, homodimer.

The protein localises to the cytoplasm. It carries out the reaction formate + NAD(+) = CO2 + NADH. Functionally, catalyzes the NAD(+)-dependent oxidation of formate to carbon dioxide. Formate oxidation is the final step in the methanol oxidation pathway in methylotrophic microorganisms. Has a role in the detoxification of exogenous formate in non-methylotrophic organisms. This Neurospora crassa (strain ATCC 24698 / 74-OR23-1A / CBS 708.71 / DSM 1257 / FGSC 987) protein is Formate dehydrogenase.